A 509-amino-acid chain; its full sequence is ATP synthase subunit alpha 1 (509 aa).

172–179 (GDRQTGKT) is an ATP binding site.

The protein belongs to the ATPase alpha/beta chains family. As to quaternary structure, F-type ATPases have 2 components, CF(1) - the catalytic core - and CF(0) - the membrane proton channel. CF(1) has five subunits: alpha(3), beta(3), gamma(1), delta(1), epsilon(1). CF(0) has four main subunits: a(1), b(1), b'(1) and c(9-12).

It is found in the cell inner membrane. It carries out the reaction ATP + H2O + 4 H(+)(in) = ADP + phosphate + 5 H(+)(out). In terms of biological role, produces ATP from ADP in the presence of a proton gradient across the membrane. The alpha chain is a regulatory subunit. This chain is ATP synthase subunit alpha 1, found in Dinoroseobacter shibae (strain DSM 16493 / NCIMB 14021 / DFL 12).